We begin with the raw amino-acid sequence, 280 residues long: Fe-S cluster assembly protein DRE2 (280 aa).

The segment at 1–121 (MSNLLVFDNS…TTLLKKSGGG (121 aa)) is N-terminal SAM-like domain. Residues 122–176 (PKKFAFKRASPATAAPSTNGTNPAATVNLNSVVTLSMDDDDLMDEDDLMEDDTNL) are linker. Residues Cys-186, Cys-198, Cys-201, and Cys-203 each contribute to the [2Fe-2S] cluster site. The interval 186-203 (CDPGPGKKRRKACKDCTC) is fe-S binding site A. Residues Cys-244, Cys-247, Cys-255, and Cys-258 each coordinate [4Fe-4S] cluster. 2 consecutive short sequence motifs (cx2C motif) follow at residues 244 to 247 (CGSC) and 255 to 258 (CDGC). The segment at 244–258 (CGSCALGDAFRCDGC) is fe-S binding site B.

Belongs to the anamorsin family. In terms of assembly, monomer. Interacts with TAH18. Interacts with MIA40. The cofactor is [2Fe-2S] cluster. [4Fe-4S] cluster is required as a cofactor.

It localises to the cytoplasm. It is found in the mitochondrion intermembrane space. Component of the cytosolic iron-sulfur (Fe-S) protein assembly (CIA) machinery required for the maturation of extramitochondrial Fe-S proteins. Part of an electron transfer chain functioning in an early step of cytosolic Fe-S biogenesis, facilitating the de novo assembly of a [4Fe-4S] cluster on the scaffold complex CFD1-NBP35. Electrons are transferred to DRE2 from NADPH via the FAD- and FMN-containing protein TAH18. TAH18-DRE2 are also required for the assembly of the diferric tyrosyl radical cofactor of ribonucleotide reductase (RNR), probably by providing electrons for reduction during radical cofactor maturation in the catalytic small subunit RNR2. This chain is Fe-S cluster assembly protein DRE2, found in Yarrowia lipolytica (strain CLIB 122 / E 150) (Yeast).